Reading from the N-terminus, the 225-residue chain is Pre-mRNA-splicing factor SPF27 (225 aa).

The residue at position 2 (A2) is an N-acetylalanine. The residue at position 94 (S94) is a Phosphoserine. Residues 138–222 (YNENLVHMIE…HGEANKENIR (85 aa)) are a coiled coil.

The protein belongs to the SPF27 family. Component of the pre-catalytic and catalytic spliceosome complexes. Component of the postcatalytic spliceosome P complex. Component of the PRP19-CDC5L splicing complex composed of a core complex comprising a homotetramer of PRPF19, CDC5L, PLRG1 and BCAS2, and at least three less stably associated proteins CTNNBL1, CWC15 and HSPA8. Interacts directly in the complex with PRPF19, CDC5L and PLRG1. In terms of tissue distribution, ubiquitously expressed.

It localises to the nucleus. The protein resides in the nucleolus. Its function is as follows. Required for pre-mRNA splicing as component of the activated spliceosome. Component of the PRP19-CDC5L complex that forms an integral part of the spliceosome and is required for activating pre-mRNA splicing. May have a scaffolding role in the spliceosome assembly as it contacts all other components of the core complex. The PRP19-CDC5L complex may also play a role in the response to DNA damage (DDR). The sequence is that of Pre-mRNA-splicing factor SPF27 (BCAS2) from Homo sapiens (Human).